The sequence spans 249 residues: RNA-free ribonuclease P (249 aa).

Residues 226–249 form a disordered region; that stretch reads NENEPEYENRDKSKEGSSGEIEFI. Positions 232-242 are enriched in basic and acidic residues; the sequence is YENRDKSKEGS.

Belongs to the HARP family.

The catalysed reaction is Endonucleolytic cleavage of RNA, removing 5'-extranucleotides from tRNA precursor.. Functionally, RNA-free RNase P that catalyzes the removal of the 5'-leader sequence from pre-tRNA to produce the mature 5'-terminus. The chain is RNA-free ribonuclease P from Methanosarcina barkeri (strain Fusaro / DSM 804).